Consider the following 665-residue polypeptide: Probable protein transport Sec1a (665 aa).

Residues 543–594 (PSPSFRGIPSASTQTSPAHQPAQSMRSRRTGGTWARPRDSDDGYSSDSVLKH) are disordered. 2 stretches are compositionally biased toward polar residues: residues 552-567 (SASTQTSPAHQPAQSM) and 585-594 (GYSSDSVLKH).

Belongs to the STXBP/unc-18/SEC1 family.

Functionally, involved in the vesicle trafficking. Binds syntaxins. This is Probable protein transport Sec1a from Oryza sativa subsp. japonica (Rice).